Reading from the N-terminus, the 242-residue chain is MTTVSMRDMLQAGVHFGHQTRYWNPKMKPFIFGARNGVHIINLEHTVPMFNEALAFISNIASKKGKVLFVGTKRAAGEAIKASALSCDQYYVDHRWLGGMLTNWKTVRQSIKRLKELESQSVDGTFDKLTKKEALMRSRELDKLEKSLGGIKNMGGLPDVLFVIGADHEHIAIKEANNLGIPVVAVVDTNSAPDGVNYIVPGNDDAMRAIRLYTSSVAAAANAGRGQDLAVQAEQDGFVEAV.

The protein belongs to the universal ribosomal protein uS2 family.

The protein is Small ribosomal subunit protein uS2 of Shewanella frigidimarina (strain NCIMB 400).